Reading from the N-terminus, the 200-residue chain is MKYLHTICLLFIFVARGNSRSCDFCHNIGKECDGYEKECSSPEDVCGKVLLEISSASLSVRTVHKNCFSSSVCKLEQFDVNIGHHSYIRGRINCCEKEQCEDRPFPGLPLSQPNGYYCPGALGLFTEDSTEFEAICKGTETKCINIVGHRHEDFPGDISYNLKGCISSCPLLSLSNATHEENRNYLEKVECKDAFQLARL.

A signal peptide spans 1–19 (MKYLHTICLLFIFVARGNS). Intrachain disulfides connect Cys22–Cys46, Cys25–Cys32, Cys39–Cys67, Cys73–Cys94, Cys95–Cys100, Cys118–Cys143, and Cys136–Cys165. Asn176 carries an N-linked (GlcNAc...) asparagine glycan.

This sequence belongs to the CNF-like-inhibitor family. As to quaternary structure, homomer of 110 kDa composed of 20-25-kDa subunits. Post-translationally, N-glycosylated. The glycosidic chain may contain superficial sialic acid residues. As to expression, expressed by the liver.

Its subcellular location is the secreted. Its function is as follows. Inhibits the enzymatic activity of basic phospholipase A2. Specifically neutralizes PLA2, myotoxic, edema-forming, cytolytic, and anti-coagulant activities, as well as intracerebral lethal effect of the basic myotoxin I from the same venom (AC P0DQP6), crotoxin heterodimer and crotoxin subunit B alone. Does not block the enzymatic activity of crude acidic PLA2 fractions from the same venom. The sequence is that of Phospholipase A2 inhibitor CgMIP-I from Cerrophidion godmani (Porthidium godmani).